We begin with the raw amino-acid sequence, 312 residues long: Olfactory receptor-like protein COR6 (312 aa).

At 1–26 (MASGNCTTPTTFILSGLTDNPGLQMP) the chain is on the extracellular side. N-linked (GlcNAc...) asparagine glycosylation occurs at N5. Residues 27-49 (LFMVFLAIYTITLLTNLGLIALI) traverse the membrane as a helical segment. Residues 50 to 57 (SIDLQLQT) are Cytoplasmic-facing. A helical transmembrane segment spans residues 58–79 (PMYIFLQNLSFTDAVYSTVITP). The Extracellular portion of the chain corresponds to 80–100 (KMLATFLEETKTISYVGCILQ). The cysteines at positions 97 and 179 are disulfide-linked. The helical transmembrane segment at 101-120 (YFSFVLLTVRECLLLAVMAY) threads the bilayer. At 121 to 139 (DRYAAICKPLLYPAIMTKA) the chain is on the cytoplasmic side. A helical membrane pass occupies residues 140–164 (VCWRLVKGLYSLAFLNFLVHTSGLL). Over 165–205 (KLSFCSSNVVNHFFCDNSPLFQISSSSTALNELLVFIFGSL) the chain is Extracellular. The helical transmembrane segment at 206–226 (FVMSSIITILISYVFIILTVV) threads the bilayer. The Cytoplasmic portion of the chain corresponds to 227–239 (RIRSKERKYKAFS). A helical membrane pass occupies residues 240 to 260 (TCTSHLMAVSLFHGTIVFMYF). Topologically, residues 261-271 (QPANNFSLDKD) are extracellular. The helical transmembrane segment at 272–292 (KIMSLFYTVVIPMLNPLIYSW) threads the bilayer. Topologically, residues 293-312 (RNKEVKDALHRAIATAVLFH) are cytoplasmic.

This sequence belongs to the G-protein coupled receptor 1 family.

It is found in the cell membrane. In terms of biological role, odorant receptor. This Gallus gallus (Chicken) protein is Olfactory receptor-like protein COR6 (COR6).